The sequence spans 479 residues: MVPSQRLSRTSSISSNEDPAESHILELEAVSDTNTDCDMDPMEGSEEHSTDGEISSSEEEDEDPTPAHTIPARPSSVVITPTSASFVIPRKKWDLQDKTVTLHRSPLCRDEDEKEETGNSSYTRGHKRRRGEVHGCTDESYGKRRHLPPGARAPRAPRAPRVPRAPRSPRAPRSNRATRGPRSESRGAGRSTRKQARQERSQRPLPNKPWFDMSLVKPVSKITFVTLPSPLASLTLEPIQDPFLQSMLAVAAHPEIGAWQKVQPRHELRRSYKTLREFFTKSTNKDTWLDARMQAIQNAGLCTLVAMLEETIFWLQEITYHGDLPLAPAEDILLACAMSLSKVILTKLKELAPCFLPNTRDYNFVKQLFYITCATARQNKVVETLSSSYVKQPLCLLAAYAAVAPAYINANCRRRHDEVEFLGHYIKNYNPGTLSSLLTEAVETHTRDCRSASCSRLVRAILSPGTGSLGLFFVPGLNQ.

The span at 1–15 (MVPSQRLSRTSSISS) shows a compositional bias: low complexity. Disordered stretches follow at residues 1 to 77 (MVPS…PSSV) and 91 to 210 (KKWD…NKPW). The segment covering 35–44 (TDCDMDPMEG) has biased composition (acidic residues). The span at 132–142 (EVHGCTDESYG) shows a compositional bias: basic and acidic residues. Zn(2+) is bound by residues Cys354, His445, Cys449, and Cys454. The segment at 354–454 (CFLPNTRDYN…HTRDCRSASC (101 aa)) adopts a CHC2-type zinc-finger fold.

It belongs to the HHV-1 ICP27 protein family. In terms of assembly, interacts with host XPO1 and with the XPO1 export pathway components small GTPase RAN and nucleoporin NUP214. Interacts with host SPEN, OTT1 and OTT3. Interacts with host SRSF1, SRSF3, SRSF7 and SRPK1. Interacts with host DHX9; this interaction may have an inhibitory effect on virion production. Interacts (via N-terminus) with host NXF1; this interaction plays a role in mRNA export. Phosphorylated by cellular protein kinase CK2.

The protein localises to the host nucleus. It is found in the host cytoplasm. Promotes the nuclear export of a subset of early and late viral mRNAs by interacting with mRNAs and cellular export proteins. Additionally may prevent the establishment of cellular antiviral state, by acting as an alternative splicing factor for cellular RNAs such as STAT1, resulting in a STAT1 mRNA incapable of producing the STAT1alpha isoform. The polypeptide is mRNA export factor ICP27 homolog (Homo sapiens (Human)).